A 451-amino-acid polypeptide reads, in one-letter code: UDP-N-acetylmuramoylalanine--D-glutamate ligase (451 aa).

116–122 (GTNGKTT) serves as a coordination point for ATP.

This sequence belongs to the MurCDEF family.

The protein resides in the cytoplasm. It catalyses the reaction UDP-N-acetyl-alpha-D-muramoyl-L-alanine + D-glutamate + ATP = UDP-N-acetyl-alpha-D-muramoyl-L-alanyl-D-glutamate + ADP + phosphate + H(+). It functions in the pathway cell wall biogenesis; peptidoglycan biosynthesis. Cell wall formation. Catalyzes the addition of glutamate to the nucleotide precursor UDP-N-acetylmuramoyl-L-alanine (UMA). The polypeptide is UDP-N-acetylmuramoylalanine--D-glutamate ligase (Clostridioides difficile (strain 630) (Peptoclostridium difficile)).